The chain runs to 403 residues: Protein WVD2-like 6 (403 aa).

Disordered regions lie at residues 1-179 (MDSE…ALPN) and 254-403 (LKKI…AVEP). The segment covering 25-56 (GDSSNGNGGTSENLECCSTQHPMEASEGTQNE) has biased composition (polar residues). The segment covering 103 to 118 (SVAPNVKPVKSPKSKS) has biased composition (low complexity). Ser113 is modified (phosphoserine). Basic and acidic residues-rich tracts occupy residues 120–132 (NGRE…HGNH), 139–153 (GTRD…RKQV), and 162–171 (QYPKEDDGKP). Over residues 263-273 (KSPKLGRKKTN) the composition is skewed to basic residues. Residues 336–348 (KVAPAKAVTASTK) show a composition bias toward low complexity. Basic and acidic residues predominate over residues 385–394 (VNEDRNESHM).

Belongs to the TPX2 family. Expressed in seedlings.

It localises to the cytoplasm. The protein localises to the cytoskeleton. Its function is as follows. Microtubule-associated protein (MAP) that regulates the orientation of interphase cortical microtubules. The protein is Protein WVD2-like 6 of Arabidopsis thaliana (Mouse-ear cress).